The chain runs to 210 residues: Potassium-transporting ATPase KdpC subunit (210 aa).

Residues 13–33 traverse the membrane as a helical segment; sequence LVTLVLLLVCGLAYPLILTGI.

Belongs to the KdpC family. The system is composed of three essential subunits: KdpA, KdpB and KdpC.

Its subcellular location is the cell membrane. Part of the high-affinity ATP-driven potassium transport (or Kdp) system, which catalyzes the hydrolysis of ATP coupled with the electrogenic transport of potassium into the cytoplasm. This subunit acts as a catalytic chaperone that increases the ATP-binding affinity of the ATP-hydrolyzing subunit KdpB by the formation of a transient KdpB/KdpC/ATP ternary complex. This chain is Potassium-transporting ATPase KdpC subunit, found in Clostridium kluyveri (strain ATCC 8527 / DSM 555 / NBRC 12016 / NCIMB 10680 / K1).